Reading from the N-terminus, the 172-residue chain is SsrA-binding protein (172 aa).

The protein belongs to the SmpB family.

The protein localises to the cytoplasm. Its function is as follows. Required for rescue of stalled ribosomes mediated by trans-translation. Binds to transfer-messenger RNA (tmRNA), required for stable association of tmRNA with ribosomes. tmRNA and SmpB together mimic tRNA shape, replacing the anticodon stem-loop with SmpB. tmRNA is encoded by the ssrA gene; the 2 termini fold to resemble tRNA(Ala) and it encodes a 'tag peptide', a short internal open reading frame. During trans-translation Ala-aminoacylated tmRNA acts like a tRNA, entering the A-site of stalled ribosomes, displacing the stalled mRNA. The ribosome then switches to translate the ORF on the tmRNA; the nascent peptide is terminated with the 'tag peptide' encoded by the tmRNA and targeted for degradation. The ribosome is freed to recommence translation, which seems to be the essential function of trans-translation. This Dehalococcoides mccartyi (strain ATCC BAA-2100 / JCM 16839 / KCTC 5957 / BAV1) protein is SsrA-binding protein.